We begin with the raw amino-acid sequence, 127 residues long: Probable soluble cytochrome b562 1 (127 aa).

The first 21 residues, 1-21 (MRKIPIIAGVFSLLITSCTFA), serve as a signal peptide directing secretion. Residues Met28 and His123 each contribute to the heme b site.

It belongs to the cytochrome b562 family. The cofactor is heme b.

It localises to the periplasm. Functionally, electron-transport protein of unknown function. The sequence is that of Probable soluble cytochrome b562 1 (cybC1) from Yersinia pestis.